The following is a 174-amino-acid chain: Large ribosomal subunit protein uL10 (174 aa).

The protein belongs to the universal ribosomal protein uL10 family. As to quaternary structure, part of the ribosomal stalk of the 50S ribosomal subunit. The N-terminus interacts with L11 and the large rRNA to form the base of the stalk. The C-terminus forms an elongated spine to which L12 dimers bind in a sequential fashion forming a multimeric L10(L12)X complex.

Forms part of the ribosomal stalk, playing a central role in the interaction of the ribosome with GTP-bound translation factors. This is Large ribosomal subunit protein uL10 from Coxiella burnetii (strain CbuK_Q154) (Coxiella burnetii (strain Q154)).